The sequence spans 196 residues: SAGA-associated factor 11 homolog (196 aa).

Residues 1–22 (MSAANMPTTTGAQGSGNQVPTT) are disordered. The SGF11-type zinc-finger motif lies at 106–127 (CTCPNCDRLVAAARFAPHLEKC). The interval 144–196 (TKEGASSAHLHSAGNAGGTDDEDDVDWSSDKRRKKSNQNSRNNGSKKNNGKTF) is disordered. Residue Ser-172 is modified to Phosphoserine. Low complexity predominate over residues 180-196 (NQNSRNNGSKKNNGKTF).

The protein belongs to the SGF11 family. Component of some SAGA transcription coactivator-HAT complexes, at least composed of Ada2b, not/nonstop, Pcaf/Gcn5, Sgf11 and Spt3. Within the SAGA complex, Sgf11, e(y)2, and not/nonstop form an additional subcomplex of SAGA called the DUB module (deubiquitination module). Interacts directly with not/nonstop. Interacts with the AMEX complex component xmas-2. Interacts with Cbp80; important for promoter recruitment of Sgf11 that is not associated with the DUB module.

It localises to the nucleus. The protein localises to the nucleoplasm. The protein resides in the cytoplasm. Functionally, component of the transcription regulatory histone acetylation (HAT) complex SAGA, a multiprotein complex that activates transcription by remodeling chromatin and mediating histone acetylation and deubiquitination. Within the SAGA complex, participates in a subcomplex that specifically deubiquitinates histone H2B. The SAGA complex is recruited to specific gene promoters by activators, where it is required for transcription. Required for nuclear receptor-mediated transactivation. Binds independently on SAGA to promoters in an RNA-dependent manner. Binds to mRNA and is essential for total mRNA export from the nucleus. Required to counteract heterochromatin silencing. Controls the development of neuronal connectivity in visual system by being required for accurate axon targeting in the optic lobe. Required for expression of ecdysone-induced genes such as br/broad. The polypeptide is SAGA-associated factor 11 homolog (Drosophila yakuba (Fruit fly)).